The following is a 284-amino-acid chain: Nucleotide-binding protein NMB0738 (284 aa).

Position 8–15 (8–15 (GLSGSGKS)) interacts with ATP. 58-61 (DVRS) lines the GTP pocket.

Belongs to the RapZ-like family.

In terms of biological role, displays ATPase and GTPase activities. This is Nucleotide-binding protein NMB0738 from Neisseria meningitidis serogroup B (strain ATCC BAA-335 / MC58).